The primary structure comprises 378 residues: Erythronate-4-phosphate dehydrogenase (378 aa).

Substrate is bound by residues Ser-45 and Thr-66. Positions 146 and 175 each coordinate NAD(+). Residue Arg-208 is part of the active site. An NAD(+)-binding site is contributed by Asp-232. Glu-237 is an active-site residue. The active-site Proton donor is the His-254. Gly-257 is an NAD(+) binding site. Substrate is bound at residue Tyr-258.

This sequence belongs to the D-isomer specific 2-hydroxyacid dehydrogenase family. PdxB subfamily. As to quaternary structure, homodimer.

The protein resides in the cytoplasm. It carries out the reaction 4-phospho-D-erythronate + NAD(+) = (R)-3-hydroxy-2-oxo-4-phosphooxybutanoate + NADH + H(+). Its pathway is cofactor biosynthesis; pyridoxine 5'-phosphate biosynthesis; pyridoxine 5'-phosphate from D-erythrose 4-phosphate: step 2/5. In terms of biological role, catalyzes the oxidation of erythronate-4-phosphate to 3-hydroxy-2-oxo-4-phosphonooxybutanoate. This is Erythronate-4-phosphate dehydrogenase from Escherichia coli (strain K12 / MC4100 / BW2952).